Reading from the N-terminus, the 262-residue chain is Homeobox protein Nkx-6.3 (262 aa).

Positions Lys-140–Ser-199 form a DNA-binding region, homeobox. The disordered stretch occupies residues Lys-197–Asp-237.

As to expression, expressed in the developing CNS and gastro-intestinal tract.

The protein resides in the nucleus. Functionally, putative transcription factor, which may be involved in patterning of central nervous system and pancreas. The protein is Homeobox protein Nkx-6.3 (Nkx6-3) of Mus musculus (Mouse).